Here is a 747-residue protein sequence, read N- to C-terminus: E3 UFM1-protein ligase 1 homolog (747 aa).

A disordered region spans residues E403–L468. A compositionally biased stretch (basic residues) spans G429–K438. Over residues G439–G449 the composition is skewed to gly residues. A compositionally biased stretch (polar residues) spans A450–S465.

This sequence belongs to the UFL1 family.

Its function is as follows. E3 UFM1-protein ligase that mediates ufmylation of target proteins. This is E3 UFM1-protein ligase 1 homolog (ufl-1) from Caenorhabditis briggsae.